We begin with the raw amino-acid sequence, 495 residues long: Putative FAD-containing monooxygenase MymA (495 aa).

FAD is bound by residues S15, E36, W45, 56 to 57 (DS), and V104.

Belongs to the FAD-binding monooxygenase family. FAD serves as cofactor.

Required for maintaining the appropriate mycolic acid composition and permeability of the envelope on its exposure to acidic pH. The sequence is that of Putative FAD-containing monooxygenase MymA (mymA) from Mycobacterium tuberculosis (strain CDC 1551 / Oshkosh).